Here is a 220-residue protein sequence, read N- to C-terminus: Inner membrane-spanning protein YciB (220 aa).

6 consecutive transmembrane segments (helical) span residues Glu-20 to Ala-40, Ile-57 to Ala-77, Leu-86 to Trp-106, Leu-123 to Phe-143, Lys-156 to Trp-176, and Phe-187 to Ile-207.

This sequence belongs to the YciB family.

Its subcellular location is the cell inner membrane. Its function is as follows. Plays a role in cell envelope biogenesis, maintenance of cell envelope integrity and membrane homeostasis. The polypeptide is Inner membrane-spanning protein YciB (Brucella abortus (strain S19)).